Reading from the N-terminus, the 419-residue chain is 4-hydroxyphenylpyruvate dioxygenase (419 aa).

VOC domains follow at residues 37–185 (GYDH…LLSR) and 216–376 (RIDH…LFTR). Histidine 219, histidine 302, and glutamate 387 together coordinate Fe cation.

The protein belongs to the 4HPPD family. The cofactor is Fe cation.

It carries out the reaction 3-(4-hydroxyphenyl)pyruvate + O2 = homogentisate + CO2. The protein operates within amino-acid degradation; L-phenylalanine degradation; acetoacetate and fumarate from L-phenylalanine: step 3/6. This is 4-hydroxyphenylpyruvate dioxygenase (HPD4) from Pyricularia oryzae (strain 70-15 / ATCC MYA-4617 / FGSC 8958) (Rice blast fungus).